Here is a 983-residue protein sequence, read N- to C-terminus: Receptor-type tyrosine-protein phosphatase-like N (983 aa).

Residues 1–40 form the signal peptide; that stretch reads MRRPRRPGGPAGCGGSEGSGGLRLLVCLLLLSGRPGGCSA. Positions 41–137 are RESP18 homology domain; it reads ISAHGCLFDR…HPRDRSGSVP (97 aa). The Lumenal segment spans residues 41 to 579; sequence ISAHGCLFDR…RQAHGISPMR (539 aa). Cysteines 59 and 68 form a disulfide. Residues 118–133 are compositionally biased toward basic and acidic residues; the sequence is RIPRLRPPEPHPRDRS. Disordered stretches follow at residues 118 to 179, 293 to 330, and 399 to 420; these read RIPR…SPLS, RARA…SPPQ, and GDTA…ASST. Residues 148-158 are compositionally biased toward polar residues; sequence SQGNPTGSSPA. Residues 307–326 are compositionally biased toward basic and acidic residues; the sequence is RAEDSSEGHEEEVLGGHGEK. 2 positions are modified to phosphoserine: Ser-311 and Ser-312. Positions 453–579 are sufficient for dimerization of proICA512; that stretch reads SPLGQSQPTV…RQAHGISPMR (127 aa). N-linked (GlcNAc...) asparagine glycosylation is found at Asn-510 and Asn-528. A helical membrane pass occupies residues 580 to 604; it reads SLLLTLVALAGVAGLLVALAVALCM. The segment at 605–736 is sufficient for dimerization of proICA512; the sequence is RHHSKQRDKE…PNTCATAQGE (132 aa). Residues 605-983 lie on the Cytoplasmic side of the membrane; sequence RHHSKQRDKE…VNAILKALPQ (379 aa). A disordered region spans residues 648–684; the sequence is RAEGQPEPSRVSSVSSQFSDAAQASPSSHSSTPSWCE. The segment covering 652-681 has biased composition (low complexity); sequence QPEPSRVSSVSSQFSDAAQASPSSHSSTPS. A Tyrosine-protein phosphatase domain is found at 713–973; that stretch reads LAKEWQALCA…EFALTAVAEE (261 aa). Lys-758 is covalently cross-linked (Glycyl lysine isopeptide (Lys-Gly) (interchain with G-Cter in SUMO)).

It belongs to the protein-tyrosine phosphatase family. Receptor class 8 subfamily. As to quaternary structure, homodimer; shown for the unprocessed protein (proICA512) in the endoplasmic reticulum and resolved during protein maturation as ICA512-TMF seems to be predominantly monomeric in secretory granules; however, ICA512-CCF interacts with ICA512-TMF disrupting the ICA512-TMF:SNTB2 complex. The isolated lumenal RESP18 homology domain has been shown to form disulfide-linked homooligomers. Interacts (via cytoplasmic domain) with phosphorylated SNTB2; this protects PTPRN against cleavage by CAPN1 to produce ICA512-CCF. Dephosphorylation of SNTB2 upon insulin stimulation disrupts the interaction and results in PTPRN cleavage. Interacts with SNX19. ICA512-CCF interacts with PIAS4; in the nucleus. Interacts with STAT5B (phosphorylated); down-regulated by ICA512-CCF sumoylation; ICA512-CCF prevents STAT5B dephosphorylation; ICA512-CCF mediates interaction of STAT5B with PIAS4. Interacts (via RESP18 homology domain) with insulin and proinsulin. Interacts with PTPRN2, PTPRA and PTPRE. In terms of processing, subject to proteolytic cleavage at multiple sites. Subject to cleavage on a pair of basic residues. Following exocytosis of secretory granules in pancreatic beta-cells ICA512-TMF located in the plasma-membrane is cleaved by mu-type calpain CPN1 to yield ICA512-CCF. Post-translationally, N-glycosylated. O-glycosylated. In terms of processing, sumoylated at two sites including Lys-758. Sumoylation decreases interaction with STAT5. In terms of tissue distribution, detected in pancreas islets. Detected in pancreas alpha, beta and delta cells, and in chromaffin cells in the adrenal medulla. Detected in amygdala, hypothalamus, autonomous nerve fibers and ganglia, especially at synaptic contacts. Detected in pituitary (at protein level). Detected in brain, specifically in cerebral cortex, diencephalon and brain stem.

It localises to the membrane. It is found in the cytoplasmic vesicle. The protein localises to the secretory vesicle membrane. Its subcellular location is the perikaryon. The protein resides in the cell projection. It localises to the axon. It is found in the synapse. The protein localises to the cell membrane. Its subcellular location is the endosome. The protein resides in the nucleus. Its function is as follows. Plays a role in vesicle-mediated secretory processes. Required for normal accumulation of secretory vesicles in hippocampus, pituitary and pancreatic islets. Required for the accumulation of normal levels of insulin-containing vesicles and preventing their degradation. Plays a role in insulin secretion in response to glucose stimuli. Required for normal accumulation of the neurotransmitters norepinephrine, dopamine and serotonin in the brain. In females, but not in males, required for normal accumulation and secretion of pituitary hormones, such as luteinizing hormone (LH) and follicle-stimulating hormone (FSH). Required to maintain normal levels of renin expression and renin release. Seems to lack intrinsic enzyme activity. Functionally, ICA512-TMF regulates dynamics and exocytosis of insulin secretory granules (SGs); binding of ICA512-TMF to SNTB2/beta-2-syntrophin is proposed to restrain SGs mobility and exocytosis by tethering them to the actin cytoskeleton depending on UTRN; the function is inhibited by cytoplasmic ICA512-CFF dimerizing with ICA512-TMF and displacing SNTB2. In terms of biological role, ICA512-CCF translocated to the nucleus promotes expression of insulin and other granule-related genes; the function implicates binding to and regulating activity of STAT5B probably by preventing its dephosphorylation and potentially by inducing its sumoylation by recruiting PIAS4. Enhances pancreatic beta-cell proliferation by converging with signaling by STAT5B and STAT3. ICA512-CCF located in the cytoplasm regulates dynamics and exocytosis of insulin secretory granules (SGs) by dimerizing with ICA512-TMF and displacing SNTB2 thus enhancing SGs mobility and exocytosis. This Rattus norvegicus (Rat) protein is Receptor-type tyrosine-protein phosphatase-like N (Ptprn).